The sequence spans 419 residues: UDP-N-acetylglucosamine 1-carboxyvinyltransferase (419 aa).

22–23 (KN) lines the phosphoenolpyruvate pocket. A UDP-N-acetyl-alpha-D-glucosamine-binding site is contributed by R95. Residue C119 is the Proton donor of the active site. C119 bears the 2-(S-cysteinyl)pyruvic acid O-phosphothioketal mark. Residues D308 and I330 each coordinate UDP-N-acetyl-alpha-D-glucosamine.

This sequence belongs to the EPSP synthase family. MurA subfamily.

It is found in the cytoplasm. It catalyses the reaction phosphoenolpyruvate + UDP-N-acetyl-alpha-D-glucosamine = UDP-N-acetyl-3-O-(1-carboxyvinyl)-alpha-D-glucosamine + phosphate. Its pathway is cell wall biogenesis; peptidoglycan biosynthesis. Cell wall formation. Adds enolpyruvyl to UDP-N-acetylglucosamine. This Rickettsia bellii (strain OSU 85-389) protein is UDP-N-acetylglucosamine 1-carboxyvinyltransferase.